Consider the following 179-residue polypeptide: Apoptosis regulator DPV022 (179 aa).

The helical transmembrane segment at 148–170 (VLITNYLKITIFGAILGITAYYI) threads the bilayer.

In terms of assembly, interacts with host BAX and BAK1.

It localises to the host mitochondrion. The protein localises to the host membrane. Its function is as follows. Plays a role in the inhibition of host apoptosis by sequestering and inactivating several proapoptotic BCL-2 proteins, including BAK1 and BAX. Prevents the conformational activation of both of them. The polypeptide is Apoptosis regulator DPV022 (DPV022) (Deerpox virus (strain Mule deer/United States/W-848-83/1983) (DPV)).